The chain runs to 748 residues: Phytochrome-like protein Cph1 (748 aa).

The PAS domain maps to A19 to I86. The tract at residues S87 to R510 is chromophore binding domain. One can recognise a GAF domain in the interval N152–E320. C259 contributes to the a tetrapyrrole binding site. In terms of domain architecture, Histidine kinase spans I535 to N748. Position 538 is a phosphohistidine; by autocatalysis (H538).

This sequence in the N-terminal section; belongs to the phytochrome family. As to quaternary structure, homodimer. In terms of processing, contains one covalently linked tetrapyrrole chromophore.

It catalyses the reaction ATP + protein L-histidine = ADP + protein N-phospho-L-histidine.. In terms of biological role, regulatory photoreceptor which exists in two forms that are reversibly interconvertible by light: the R form that absorbs maximally in the red region of the spectrum and the FR form that absorbs maximally in the far-red region. Also has a slight blue shift for the far-red maximum. Forms a two-component system with the Rrcp1 response regulator. The chain is Phytochrome-like protein Cph1 (cph1) from Synechocystis sp. (strain ATCC 27184 / PCC 6803 / Kazusa).